Consider the following 831-residue polypeptide: Pleckstrin homology-like domain family B member 1 (831 aa).

Residues 1 to 11 (LTLGARGRRTR) are compositionally biased toward basic residues. Residues 1 to 73 (LTLGARGRRT…PIPRERKNSI (73 aa)) form a disordered region. Arg-6 is modified (omega-N-methylarginine). A phosphoserine mark is found at Ser-12 and Ser-14. A Phosphothreonine modification is found at Thr-16. Phosphoserine is present on residues Ser-27, Ser-33, Ser-45, Ser-49, Ser-57, Ser-72, Ser-77, and Ser-175. The segment covering 39-51 (GSLTGASPRQSPH) has biased composition (polar residues). Disordered stretches follow at residues 160–209 (RSGE…LQGE) and 416–465 (NGDM…QNGT). Positions 174–188 (ESMERSDEENLKEEC) are enriched in basic and acidic residues. A coiled-coil region spans residues 180–306 (DEENLKEECS…TETKLFEDLE (127 aa)). Phosphoserine occurs at positions 421 and 467. Over residues 421 to 442 (SPLPRTRSGPLPSSSGSSSSSS) the composition is skewed to low complexity. Residues 584-603 (SMETSISTGGNSACSPDNMS) form a disordered region. Residues 610–676 (MGKIEEMEKM…QQLVEKEVKL (67 aa)) adopt a coiled-coil conformation. The 104-residue stretch at 721–824 (SKVCRGYLIK…WMDVIVTGAE (104 aa)) folds into the PH domain.

In Rattus norvegicus (Rat), this protein is Pleckstrin homology-like domain family B member 1 (Phldb1).